Here is a 134-residue protein sequence, read N- to C-terminus: UPF0102 protein Rmet_3430 (134 aa).

The protein belongs to the UPF0102 family.

The sequence is that of UPF0102 protein Rmet_3430 from Cupriavidus metallidurans (strain ATCC 43123 / DSM 2839 / NBRC 102507 / CH34) (Ralstonia metallidurans).